A 123-amino-acid chain; its full sequence is Large ribosomal subunit protein bL12 (123 aa).

The disordered stretch occupies residues 96-123; it reads NVKEGVSKEEAEGLKKSLEEAGATVELK. A compositionally biased stretch (basic and acidic residues) spans 100–114; it reads GVSKEEAEGLKKSLE.

This sequence belongs to the bacterial ribosomal protein bL12 family. In terms of assembly, homodimer. Part of the ribosomal stalk of the 50S ribosomal subunit. Forms a multimeric L10(L12)X complex, where L10 forms an elongated spine to which 2 to 4 L12 dimers bind in a sequential fashion. Binds GTP-bound translation factors.

Forms part of the ribosomal stalk which helps the ribosome interact with GTP-bound translation factors. Is thus essential for accurate translation. The protein is Large ribosomal subunit protein bL12 of Flavobacterium johnsoniae (strain ATCC 17061 / DSM 2064 / JCM 8514 / BCRC 14874 / CCUG 350202 / NBRC 14942 / NCIMB 11054 / UW101) (Cytophaga johnsonae).